The sequence spans 138 residues: ATP synthase epsilon chain (138 aa).

This sequence belongs to the ATPase epsilon chain family. F-type ATPases have 2 components, CF(1) - the catalytic core - and CF(0) - the membrane proton channel. CF(1) has five subunits: alpha(3), beta(3), gamma(1), delta(1), epsilon(1). CF(0) has three main subunits: a, b and c.

The protein localises to the cell inner membrane. Its function is as follows. Produces ATP from ADP in the presence of a proton gradient across the membrane. The protein is ATP synthase epsilon chain of Vesicomyosocius okutanii subsp. Calyptogena okutanii (strain HA).